A 363-amino-acid chain; its full sequence is Two-pore potassium channel 1 (363 aa).

The disordered stretch occupies residues 1–61 (MSSDAARTPL…DDVKIDEPPP (61 aa)). Topologically, residues 1–78 (MSSDAARTPL…FSDLNPNLRR (78 aa)) are cytoplasmic. Basic residues predominate over residues 31–42 (SSRKRRLRRSRS). The helical transmembrane segment at 79-99 (VIMFLALYLTIGTLCFYLVRD) threads the bilayer. Positions 111 to 130 (DALYFCIVTMTTVGYGDLVP) form an intramembrane region, pore-forming. The chain crosses the membrane as a helical span at residues 137–157 (LLACAFVFSGMVLVGHLLSRA). The Cytoplasmic portion of the chain corresponds to 158-197 (ADYLVEKQEALLVRAFHLRQSFGPTDILKELHTNKLRYKC). A helical transmembrane segment spans residues 198–218 (YATCLVLVVLFIVGTIFLVMV). The segment at residues 225–244 (SAFYCVCSTVTTLGYGDKSF) is an intramembrane region (pore-forming). The helical transmembrane segment at 251–271 (LFAVFWILTSSICLAQFFLYV) threads the bilayer. Topologically, residues 272 to 363 (AELNTENKQR…LAQTTSQIQR (92 aa)) are cytoplasmic. EF-hand domains lie at 288-323 (LTRR…EMGK) and 327-362 (KDIS…SQIQ). The Endoplasmic reticulum release signal motif lies at 296–298 (DLE). Residues Asp-301, Asp-303, Asp-305, Glu-312, Asp-340, Asp-342, Ser-344, Thr-346, and Asp-351 each contribute to the Ca(2+) site.

The protein belongs to the two pore domain potassium channel (TC 1.A.1.7) family. In terms of assembly, homodimer. Interacts with GRF1 and GRF6, but only GRF6 modulates the channel activity. Post-translationally, phosphorylation at Ser-42 increases and stabilizes the interaction with 14-3-3 proteins. In terms of tissue distribution, detected in mesophyll cells, guard cells and vascular tissues of the leaves. Expressed in the hilum, where the funiculus is attached during fruit maturation and in the embryo. Also expressed at a lower level in seedlings, root tips and elongation zones, and flowers. Could be detected in mitotically active tissues.

It is found in the vacuole membrane. Its activity is regulated as follows. Could be activated by protein kinase C. Strongly induced by calcium. Blocked by barium, tetraethylammonium (TEA), quinine and quinidine. In terms of biological role, voltage-independent, large conductance and potassium-selective tonoplast ion channel. Regulated by cytoplasmic calcium and pH. Does not mediate slow-vacuolar (SV) ionic currents, but essential to establish VK currents. Has some permeability for Rb(+) and NH(4)(+), but none for Na(+), Cs(+) or Li(+). Involved in intracellular K(+) redistribution and/or K(+) retranslocation between different tissues. The polypeptide is Two-pore potassium channel 1 (TPK1) (Arabidopsis thaliana (Mouse-ear cress)).